A 616-amino-acid polypeptide reads, in one-letter code: Probable methyltransferase PMT2 (616 aa).

The Cytoplasmic portion of the chain corresponds to 1 to 13 (MALKSSSADGKTR). Residues 14 to 34 (SSVQIFIVFSLCCFFYILGAW) form a helical; Signal-anchor for type II membrane protein membrane-spanning segment. The Lumenal segment spans residues 35–616 (QRSGFGKGDS…YWVTNSTSTH (582 aa)). N-linked (GlcNAc...) asparagine glycans are attached at residues Asn205 and Asn611.

Belongs to the methyltransferase superfamily.

It is found in the golgi apparatus membrane. This is Probable methyltransferase PMT2 from Arabidopsis thaliana (Mouse-ear cress).